Reading from the N-terminus, the 359-residue chain is (2E,6E)-farnesyl diphosphate synthase (359 aa).

Residues 1–21 are disordered; it reads MRGTDEKYGLPPQPDSDRMTR. Isopentenyl diphosphate-binding residues include Lys-73, Arg-76, and His-105. Mg(2+) contacts are provided by Asp-112 and Asp-116. The short motif at 112 to 116 is the DDXXD motif element; that stretch reads DDLMD. (2E)-geranyl diphosphate is bound at residue Arg-121. Arg-122 contacts isopentenyl diphosphate. Residues Lys-201, Thr-202, and Gln-239 each contribute to the (2E)-geranyl diphosphate site. The DDXXD motif signature appears at 242–246; it reads DDLLG. The (2E)-geranyl diphosphate site is built by Lys-256 and Lys-266.

This sequence belongs to the FPP/GGPP synthase family. The cofactor is Mg(2+).

The protein localises to the cytoplasm. It carries out the reaction isopentenyl diphosphate + (2E)-geranyl diphosphate = (2E,6E)-farnesyl diphosphate + diphosphate. Its pathway is isoprenoid biosynthesis; farnesyl diphosphate biosynthesis; farnesyl diphosphate from geranyl diphosphate and isopentenyl diphosphate. Catalyzes the condensation of isopentenyl pyrophosphate (IPP) with geranyl diphosphate (GPP) to yield (2E,6E)-farnesyl diphosphate (E,E-FPP). May be used for squalene and possibly sterol biosynthesis. This chain is (2E,6E)-farnesyl diphosphate synthase, found in Mycobacterium bovis (strain ATCC BAA-935 / AF2122/97).